The sequence spans 492 residues: Zn(2)-C6 fungal-type transcription factor (492 aa).

A DNA-binding region (zn(2)-C6 fungal-type) is located at residues 14–41; the sequence is CRRCKNRKIKCDEVHPRCGNCAKHGVPC. Residues 58 to 119 form a disordered region; it reads TSTESVGAPT…QPSISSSTNT (62 aa). Residues 78–95 show a composition bias toward low complexity; it reads SAPRTPLTRPRAPSSPAR. The residue at position 82 (Thr82) is a Phosphothreonine. Phosphoserine is present on residues Ser92 and Ser102. A compositionally biased stretch (polar residues) spans 107 to 119; sequence VYSQPSISSSTNT. Thr217 carries the phosphothreonine modification. Ser305 carries the post-translational modification Phosphoserine.

In terms of assembly, interacts with HOG1. Post-translationally, phosphorylation at Thr-82, Ser-92, Ser-102, thr-117 and ser-305 by HOG1 is required for regulating expression of ergosterol biosynthesis genes.

It localises to the nucleus. In terms of biological role, transcription factor that targets gene promoters containing 2 conserved CGAA repeat sequences. Positively regulates the expression of ergosterol biosynthesis genes including CYP51A and CYP51B encoding the sterol 14-alpha demethylase, and ERG6A and ERG6B encoding the sterol 24-C-methyltransferase. The chain is Zn(2)-C6 fungal-type transcription factor from Gibberella zeae (strain ATCC MYA-4620 / CBS 123657 / FGSC 9075 / NRRL 31084 / PH-1) (Wheat head blight fungus).